Reading from the N-terminus, the 91-residue chain is MEYEYPIDLDWSNEEMISVINFFNHVEKYYESGVTAGDFMGAYKRFKEIVPAKAEEKQIFNTFEKSSGYNSYKAVQDVKTHSEEQRVTAKK.

The protein belongs to the UPF0223 family.

The sequence is that of UPF0223 protein SACOL1106 from Staphylococcus aureus (strain COL).